The chain runs to 35 residues: U14-ctenitoxin-Pn1a (35 aa).

3 disulfide bridges follow: Cys-3–Cys-17, Cys-10–Cys-22, and Cys-16–Cys-32.

As to expression, expressed by the venom gland.

It is found in the secreted. Its function is as follows. Neurotoxin. The chain is U14-ctenitoxin-Pn1a from Phoneutria nigriventer (Brazilian armed spider).